The chain runs to 296 residues: Lipoyl synthase (296 aa).

7 residues coordinate [4Fe-4S] cluster: C35, C40, C46, C61, C65, C68, and S274. One can recognise a Radical SAM core domain in the interval 47–263; the sequence is WSSKHVTVMI…KEAAYARGFL (217 aa).

This sequence belongs to the radical SAM superfamily. Lipoyl synthase family. [4Fe-4S] cluster serves as cofactor.

The protein resides in the cytoplasm. It carries out the reaction [[Fe-S] cluster scaffold protein carrying a second [4Fe-4S](2+) cluster] + N(6)-octanoyl-L-lysyl-[protein] + 2 oxidized [2Fe-2S]-[ferredoxin] + 2 S-adenosyl-L-methionine + 4 H(+) = [[Fe-S] cluster scaffold protein] + N(6)-[(R)-dihydrolipoyl]-L-lysyl-[protein] + 4 Fe(3+) + 2 hydrogen sulfide + 2 5'-deoxyadenosine + 2 L-methionine + 2 reduced [2Fe-2S]-[ferredoxin]. It participates in protein modification; protein lipoylation via endogenous pathway; protein N(6)-(lipoyl)lysine from octanoyl-[acyl-carrier-protein]: step 2/2. Catalyzes the radical-mediated insertion of two sulfur atoms into the C-6 and C-8 positions of the octanoyl moiety bound to the lipoyl domains of lipoate-dependent enzymes, thereby converting the octanoylated domains into lipoylated derivatives. This Neorickettsia sennetsu (strain ATCC VR-367 / Miyayama) (Ehrlichia sennetsu) protein is Lipoyl synthase.